Reading from the N-terminus, the 230-residue chain is Uracil-DNA glycosylase (230 aa).

The Proton acceptor role is filled by D70.

It belongs to the uracil-DNA glycosylase (UDG) superfamily. UNG family.

The protein resides in the cytoplasm. The catalysed reaction is Hydrolyzes single-stranded DNA or mismatched double-stranded DNA and polynucleotides, releasing free uracil.. Functionally, excises uracil residues from the DNA which can arise as a result of misincorporation of dUMP residues by DNA polymerase or due to deamination of cytosine. The protein is Uracil-DNA glycosylase of Pseudomonas syringae pv. tomato (strain ATCC BAA-871 / DC3000).